Here is a 208-residue protein sequence, read N- to C-terminus: Uracil phosphoribosyltransferase (208 aa).

5-phospho-alpha-D-ribose 1-diphosphate contacts are provided by residues arginine 78, arginine 103, and 130–138 (DPMLATGGS). Uracil is bound by residues isoleucine 193 and 198–200 (GDA). Aspartate 199 lines the 5-phospho-alpha-D-ribose 1-diphosphate pocket.

Belongs to the UPRTase family. Requires Mg(2+) as cofactor.

The enzyme catalyses UMP + diphosphate = 5-phospho-alpha-D-ribose 1-diphosphate + uracil. It participates in pyrimidine metabolism; UMP biosynthesis via salvage pathway; UMP from uracil: step 1/1. Allosterically activated by GTP. Functionally, catalyzes the conversion of uracil and 5-phospho-alpha-D-ribose 1-diphosphate (PRPP) to UMP and diphosphate. The sequence is that of Uracil phosphoribosyltransferase from Tolumonas auensis (strain DSM 9187 / NBRC 110442 / TA 4).